A 321-amino-acid polypeptide reads, in one-letter code: Coproporphyrin III ferrochelatase (321 aa).

Fe(2+) contacts are provided by histidine 185 and glutamate 267.

This sequence belongs to the ferrochelatase family.

It localises to the cytoplasm. The catalysed reaction is Fe-coproporphyrin III + 2 H(+) = coproporphyrin III + Fe(2+). It participates in porphyrin-containing compound metabolism; protoheme biosynthesis. Involved in coproporphyrin-dependent heme b biosynthesis. Catalyzes the insertion of ferrous iron into coproporphyrin III to form Fe-coproporphyrin III. This is Coproporphyrin III ferrochelatase from Lacticaseibacillus paracasei (strain ATCC 334 / BCRC 17002 / CCUG 31169 / CIP 107868 / KCTC 3260 / NRRL B-441) (Lactobacillus paracasei).